Consider the following 509-residue polypeptide: uncharacterized protein (509 aa).

4 disordered regions span residues 112–131 (KSKQ…SENE), 152–325 (NKNT…NNDS), 365–457 (NNIN…PNQG), and 488–509 (AQQP…VQQQ). Composition is skewed to low complexity over residues 116–127 (NNNGFNGHKGNF) and 153–184 (KNTI…SNTT). A compositionally biased stretch (acidic residues) spans 189-217 (YSDDDYQNEQNEFEEEDYDSNDDENDSHD). Residues 228–242 (KTTNQLKRKVSSSFT) show a composition bias toward polar residues. Composition is skewed to low complexity over residues 243 to 325 (NNNY…NNDS) and 365 to 397 (NNIN…TNND). Residues 398–422 (LKSSNHSNYDFNYNTNERLSHSPIQ) show a composition bias toward polar residues. The segment covering 423 to 442 (THSSSNNSTPSNQSPTFPSN) has biased composition (low complexity). 2 stretches are compositionally biased toward polar residues: residues 443–457 (YISQ…PNQG) and 496–509 (NNNV…VQQQ).

This is an uncharacterized protein from Dictyostelium discoideum (Social amoeba).